Here is a 113-residue protein sequence, read N- to C-terminus: uncharacterized protein (113 aa).

Its subcellular location is the mitochondrion. This is an uncharacterized protein from Paramecium tetraurelia.